The chain runs to 46 residues: Major cold shock protein (46 aa).

In terms of domain architecture, CSD spans 1–46 (DKGFGFITPADGSKDVFVHFSAIQSNDFKTLDEGQKVEFSIENGAK).

In terms of assembly, homodimer.

The protein localises to the cytoplasm. The polypeptide is Major cold shock protein (cspA) (Yersinia enterocolitica).